The chain runs to 430 residues: Serine--tRNA ligase (430 aa).

235–237 (TSE) lines the L-serine pocket. 266 to 268 (RSE) contributes to the ATP binding site. Position 289 (glutamate 289) interacts with L-serine. ATP is bound at residue 353–356 (EISS). Serine 388 is a binding site for L-serine.

Belongs to the class-II aminoacyl-tRNA synthetase family. Type-1 seryl-tRNA synthetase subfamily. As to quaternary structure, homodimer. The tRNA molecule binds across the dimer.

Its subcellular location is the cytoplasm. The catalysed reaction is tRNA(Ser) + L-serine + ATP = L-seryl-tRNA(Ser) + AMP + diphosphate + H(+). It catalyses the reaction tRNA(Sec) + L-serine + ATP = L-seryl-tRNA(Sec) + AMP + diphosphate + H(+). It participates in aminoacyl-tRNA biosynthesis; selenocysteinyl-tRNA(Sec) biosynthesis; L-seryl-tRNA(Sec) from L-serine and tRNA(Sec): step 1/1. Catalyzes the attachment of serine to tRNA(Ser). Is also able to aminoacylate tRNA(Sec) with serine, to form the misacylated tRNA L-seryl-tRNA(Sec), which will be further converted into selenocysteinyl-tRNA(Sec). This chain is Serine--tRNA ligase, found in Azoarcus sp. (strain BH72).